The chain runs to 2145 residues: U5 small nuclear ribonucleoprotein 200 kDa helicase (2145 aa).

Disordered regions lie at residues 54 to 82 (GDRA…AQQF) and 202 to 243 (DSDE…GDGH). Acidic residues predominate over residues 220-231 (SEEESEEEEGVD). Residues 484-667 (DSALRSKEHL…FLRVKPEHLH (184 aa)) form the Helicase ATP-binding 1 domain. Position 497-504 (497-504 (APTGAGKT)) interacts with ATP. A DEAH box motif is present at residues 609 to 612 (DEIH). Positions 677–894 (PLEQQYIGVT…QMVSRLTDML (218 aa)) constitute a Helicase C-terminal domain. Residues 975-1278 (TELGRIASHF…IGAETVLPIS (304 aa)) form the SEC63 1 domain. In terms of domain architecture, Helicase ATP-binding 2 spans 1331-1506 (RTVFESNENV…WLGCSASATF (176 aa)). 1344–1351 (APNGSGKT) provides a ligand contact to ATP. Residues 1448-1451 (DDLH) carry the DEAH box motif. Positions 1812 to 2124 (LNLGMIASYY…YLGADQEFDV (313 aa)) constitute an SEC63 2 domain.

Belongs to the helicase family. SKI2 subfamily.

The protein localises to the nucleus. It carries out the reaction ATP + H2O = ADP + phosphate + H(+). Functionally, catalyzes the ATP-dependent unwinding of U4/U6 RNA duplices, an essential step in the assembly of a catalytically active spliceosome. Plays a role in pre-mRNA splicing. The chain is U5 small nuclear ribonucleoprotein 200 kDa helicase from Caenorhabditis elegans.